We begin with the raw amino-acid sequence, 485 residues long: Protein nucleotidyltransferase YdiU (485 aa).

ATP is bound by residues Gly-100, Gly-102, Arg-103, Lys-123, Asp-135, Gly-136, Arg-189, and Arg-196. Residue Asp-265 is the Proton acceptor of the active site. The Mg(2+) site is built by Asn-266 and Asp-275. Residue Asp-275 coordinates ATP.

The protein belongs to the SELO family. Mg(2+) serves as cofactor. Mn(2+) is required as a cofactor.

The catalysed reaction is L-seryl-[protein] + ATP = 3-O-(5'-adenylyl)-L-seryl-[protein] + diphosphate. It carries out the reaction L-threonyl-[protein] + ATP = 3-O-(5'-adenylyl)-L-threonyl-[protein] + diphosphate. The enzyme catalyses L-tyrosyl-[protein] + ATP = O-(5'-adenylyl)-L-tyrosyl-[protein] + diphosphate. It catalyses the reaction L-histidyl-[protein] + UTP = N(tele)-(5'-uridylyl)-L-histidyl-[protein] + diphosphate. The catalysed reaction is L-seryl-[protein] + UTP = O-(5'-uridylyl)-L-seryl-[protein] + diphosphate. It carries out the reaction L-tyrosyl-[protein] + UTP = O-(5'-uridylyl)-L-tyrosyl-[protein] + diphosphate. Nucleotidyltransferase involved in the post-translational modification of proteins. It can catalyze the addition of adenosine monophosphate (AMP) or uridine monophosphate (UMP) to a protein, resulting in modifications known as AMPylation and UMPylation. The polypeptide is Protein nucleotidyltransferase YdiU (Trichormus variabilis (strain ATCC 29413 / PCC 7937) (Anabaena variabilis)).